The following is a 373-amino-acid chain: Spermidine/putrescine import ATP-binding protein PotA (373 aa).

The ABC transporter domain occupies 11-241; the sequence is IELRSLKKSY…PSNLFVAKFI (231 aa). 43–50 serves as a coordination point for ATP; that stretch reads GPSGCGKT.

This sequence belongs to the ABC transporter superfamily. Spermidine/putrescine importer (TC 3.A.1.11.1) family. In terms of assembly, the complex is composed of two ATP-binding proteins (PotA), two transmembrane proteins (PotB and PotC) and a solute-binding protein (PotD).

The protein localises to the cell inner membrane. The catalysed reaction is ATP + H2O + polyamine-[polyamine-binding protein]Side 1 = ADP + phosphate + polyamineSide 2 + [polyamine-binding protein]Side 1.. Its function is as follows. Part of the ABC transporter complex PotABCD involved in spermidine/putrescine import. Responsible for energy coupling to the transport system. The sequence is that of Spermidine/putrescine import ATP-binding protein PotA from Mannheimia succiniciproducens (strain KCTC 0769BP / MBEL55E).